A 167-amino-acid polypeptide reads, in one-letter code: Putative N-acetylgalactosamine-6-phosphate deacetylase (167 aa).

It belongs to the metallo-dependent hydrolases superfamily. NagA family.

It carries out the reaction N-acetyl-D-galactosamine 6-phosphate + H2O = D-galactosamine 6-phosphate + acetate. The sequence is that of Putative N-acetylgalactosamine-6-phosphate deacetylase (agaA) from Escherichia coli (strain K12).